The chain runs to 503 residues: Probable 2-isopropylmalate synthase (503 aa).

One can recognise a Pyruvate carboxyltransferase domain in the interval 8 to 259 (IRVFDTTLRD…KTNIKTEHLF (252 aa)). A divalent metal cation-binding residues include Asp17, His197, His199, and Asn233.

This sequence belongs to the alpha-IPM synthase/homocitrate synthase family. Homodimer. Requires a divalent metal cation as cofactor.

The catalysed reaction is 3-methyl-2-oxobutanoate + acetyl-CoA + H2O = (2S)-2-isopropylmalate + CoA + H(+). Its pathway is amino-acid biosynthesis; L-leucine biosynthesis; L-leucine from 3-methyl-2-oxobutanoate: step 1/4. Its function is as follows. Catalyzes the condensation of the acetyl group of acetyl-CoA with 3-methyl-2-oxobutanoate (2-oxoisovalerate) to form 3-carboxy-3-hydroxy-4-methylpentanoate (2-isopropylmalate). In Archaeoglobus fulgidus (strain ATCC 49558 / DSM 4304 / JCM 9628 / NBRC 100126 / VC-16), this protein is Probable 2-isopropylmalate synthase (leuA).